The chain runs to 322 residues: Uracil-DNA glycosylase (322 aa).

Asp142 serves as the catalytic Proton acceptor.

Belongs to the uracil-DNA glycosylase (UDG) superfamily. UNG family.

Its subcellular location is the mitochondrion. The protein resides in the nucleus. It carries out the reaction Hydrolyzes single-stranded DNA or mismatched double-stranded DNA and polynucleotides, releasing free uracil.. Functionally, excises uracil residues from the DNA which can arise as a result of misincorporation of dUMP residues by DNA polymerase or due to deamination of cytosine. The protein is Uracil-DNA glycosylase (ung1) of Schizosaccharomyces pombe (strain 972 / ATCC 24843) (Fission yeast).